A 275-amino-acid polypeptide reads, in one-letter code: Large ribosomal subunit protein uL2 (275 aa).

The interval 236 to 263 (EGRGKGQHPVTPWGMPTKGYKTRRGRRA) is disordered.

The protein belongs to the universal ribosomal protein uL2 family. Part of the 50S ribosomal subunit. Forms a bridge to the 30S subunit in the 70S ribosome.

Functionally, one of the primary rRNA binding proteins. Required for association of the 30S and 50S subunits to form the 70S ribosome, for tRNA binding and peptide bond formation. It has been suggested to have peptidyltransferase activity; this is somewhat controversial. Makes several contacts with the 16S rRNA in the 70S ribosome. The polypeptide is Large ribosomal subunit protein uL2 (Pseudothermotoga lettingae (strain ATCC BAA-301 / DSM 14385 / NBRC 107922 / TMO) (Thermotoga lettingae)).